The primary structure comprises 189 residues: Crossover junction endodeoxyribonuclease RuvC (189 aa).

Residues D12, E72, and D147 contribute to the active site. Mg(2+) is bound by residues D12, E72, and D147.

Belongs to the RuvC family. In terms of assembly, homodimer which binds Holliday junction (HJ) DNA. The HJ becomes 2-fold symmetrical on binding to RuvC with unstacked arms; it has a different conformation from HJ DNA in complex with RuvA. In the full resolvosome a probable DNA-RuvA(4)-RuvB(12)-RuvC(2) complex forms which resolves the HJ. Requires Mg(2+) as cofactor.

It is found in the cytoplasm. The catalysed reaction is Endonucleolytic cleavage at a junction such as a reciprocal single-stranded crossover between two homologous DNA duplexes (Holliday junction).. In terms of biological role, the RuvA-RuvB-RuvC complex processes Holliday junction (HJ) DNA during genetic recombination and DNA repair. Endonuclease that resolves HJ intermediates. Cleaves cruciform DNA by making single-stranded nicks across the HJ at symmetrical positions within the homologous arms, yielding a 5'-phosphate and a 3'-hydroxyl group; requires a central core of homology in the junction. The consensus cleavage sequence is 5'-(A/T)TT(C/G)-3'. Cleavage occurs on the 3'-side of the TT dinucleotide at the point of strand exchange. HJ branch migration catalyzed by RuvA-RuvB allows RuvC to scan DNA until it finds its consensus sequence, where it cleaves and resolves the cruciform DNA. The sequence is that of Crossover junction endodeoxyribonuclease RuvC from Porphyromonas gingivalis (strain ATCC BAA-308 / W83).